Reading from the N-terminus, the 338-residue chain is tRNA N6-adenosine threonylcarbamoyltransferase (338 aa).

Positions 114 and 118 each coordinate Fe cation. Residues 136–140, Asp169, Gly182, Asp186, and Asn275 contribute to the substrate site; that span reads LVSGG. Position 301 (Asp301) interacts with Fe cation.

It belongs to the KAE1 / TsaD family. Requires Fe(2+) as cofactor.

The protein resides in the cytoplasm. The catalysed reaction is L-threonylcarbamoyladenylate + adenosine(37) in tRNA = N(6)-L-threonylcarbamoyladenosine(37) in tRNA + AMP + H(+). In terms of biological role, required for the formation of a threonylcarbamoyl group on adenosine at position 37 (t(6)A37) in tRNAs that read codons beginning with adenine. Is involved in the transfer of the threonylcarbamoyl moiety of threonylcarbamoyl-AMP (TC-AMP) to the N6 group of A37, together with TsaE and TsaB. TsaD likely plays a direct catalytic role in this reaction. The polypeptide is tRNA N6-adenosine threonylcarbamoyltransferase (Streptococcus equi subsp. zooepidemicus (strain MGCS10565)).